The chain runs to 218 residues: Glutathione S-transferase Mu 1 (218 aa).

The region spanning 2–88 (PMTLGYWDIR…YIARKHNLCG (87 aa)) is the GST N-terminal domain. Position 7 to 8 (7 to 8 (YW)) interacts with glutathione. At Thr-34 the chain carries Phosphothreonine. Residues 43-46 (RSQW), Lys-50, 59-60 (NL), and 72-73 (QS) contribute to the glutathione site. The GST C-terminal domain maps to 90-208 (TEEEKIRVDI…KSSRFLPKPL (119 aa)). Substrate is bound at residue Tyr-116.

Belongs to the GST superfamily. Mu family. In terms of assembly, homodimer.

It localises to the cytoplasm. The catalysed reaction is RX + glutathione = an S-substituted glutathione + a halide anion + H(+). The enzyme catalyses prostaglandin A2 + glutathione = prostaglandin A2-S-(R)-glutathione. It catalyses the reaction prostaglandin J2 + glutathione = prostaglandin J2-S-(R)-glutathione. It carries out the reaction prostaglandin J2 + glutathione = prostaglandin J2-S-(S)-glutathione. The catalysed reaction is prostaglandin A2 + glutathione = prostaglandin A2-S-(S)-glutathione. The enzyme catalyses 11(S)-hydroxy-14(S),15(S)-epoxy-(5Z,8Z,12E)-eicosatrienoate + glutathione = (11S,15S)-dihydroxy-14(R)-S-glutathionyl-(5Z,8Z,12E)-eicosatrienoate. Its function is as follows. Conjugation of reduced glutathione to a wide number of exogenous and endogenous hydrophobic electrophiles. Involved in the formation of glutathione conjugates of both prostaglandin A2 (PGA2) and prostaglandin J2 (PGJ2). Participates in the formation of novel hepoxilin regioisomers. In Macaca fascicularis (Crab-eating macaque), this protein is Glutathione S-transferase Mu 1 (GSTM1).